We begin with the raw amino-acid sequence, 302 residues long: Serine/threonine-protein phosphatase alpha-2 isoform (302 aa).

Residues Asp62, His64, Asp90, and Asn122 each contribute to the Mn(2+) site. His123 functions as the Proton donor in the catalytic mechanism. 2 residues coordinate Mn(2+): His171 and His246.

Belongs to the PPP phosphatase family. PP-1 subfamily. In terms of assembly, interacts with Nop17l. Interacts with uri; uri inhibits Pp1-87B phosphatase activity. Interacts with Rif1. Mn(2+) serves as cofactor.

Its subcellular location is the cytoplasm. The enzyme catalyses O-phospho-L-seryl-[protein] + H2O = L-seryl-[protein] + phosphate. The catalysed reaction is O-phospho-L-threonyl-[protein] + H2O = L-threonyl-[protein] + phosphate. In terms of biological role, is essential for the regulation of mitotic chromosomal segregation as well as regulation of chromatin condensation during interphase. This is Serine/threonine-protein phosphatase alpha-2 isoform (Pp1-87B) from Drosophila melanogaster (Fruit fly).